A 235-amino-acid chain; its full sequence is Phosphoribosylformylglycinamidine synthase subunit PurQ (235 aa).

Positions F3–T234 constitute a Glutamine amidotransferase type-1 domain. The active-site Nucleophile is C86. Residues H203 and E205 contribute to the active site.

Part of the FGAM synthase complex composed of 1 PurL, 1 PurQ and 2 PurS subunits.

The protein localises to the cytoplasm. It carries out the reaction N(2)-formyl-N(1)-(5-phospho-beta-D-ribosyl)glycinamide + L-glutamine + ATP + H2O = 2-formamido-N(1)-(5-O-phospho-beta-D-ribosyl)acetamidine + L-glutamate + ADP + phosphate + H(+). The enzyme catalyses L-glutamine + H2O = L-glutamate + NH4(+). Its pathway is purine metabolism; IMP biosynthesis via de novo pathway; 5-amino-1-(5-phospho-D-ribosyl)imidazole from N(2)-formyl-N(1)-(5-phospho-D-ribosyl)glycinamide: step 1/2. Part of the phosphoribosylformylglycinamidine synthase complex involved in the purines biosynthetic pathway. Catalyzes the ATP-dependent conversion of formylglycinamide ribonucleotide (FGAR) and glutamine to yield formylglycinamidine ribonucleotide (FGAM) and glutamate. The FGAM synthase complex is composed of three subunits. PurQ produces an ammonia molecule by converting glutamine to glutamate. PurL transfers the ammonia molecule to FGAR to form FGAM in an ATP-dependent manner. PurS interacts with PurQ and PurL and is thought to assist in the transfer of the ammonia molecule from PurQ to PurL. In Acaryochloris marina (strain MBIC 11017), this protein is Phosphoribosylformylglycinamidine synthase subunit PurQ.